The primary structure comprises 914 residues: Serine/threonine-protein kinase MST20 (914 aa).

Over residues 1 to 12 (MDGHSNFTQPSD) the composition is skewed to polar residues. Disordered stretches follow at residues 1–140 (MDGH…QLQN), 156–184 (NQYSAASHRRSNSYGHPHGPQSSNSLTFN), and 251–286 (AMSEKSQQVRGMEAQLPTSKRYSDETKEPKPGVLRK). Low complexity-rich tracts occupy residues 13-26 (TSHASHTIPSSSSS), 63-72 (RSSTSLRRAP), and 79-97 (TPTSTHASNSSSPRNPSSS). A compositionally biased stretch (basic and acidic residues) spans 122-136 (ARDRDSDPARNDHGH). Residues 156–166 (NQYSAASHRRS) show a composition bias toward basic residues. Polar residues predominate over residues 175 to 184 (PQSSNSLTFN). The span at 271 to 280 (RYSDETKEPK) shows a compositional bias: basic and acidic residues. The CRIB domain maps to 306–319 (ISAPENPVHVTHVG). Positions 408 to 615 (SPMISPPASP…RHRSRQSNGL (208 aa)) are disordered. Composition is skewed to low complexity over residues 516–548 (AYPASQQSPAVQAAYQQQLMQQQQEQALAQAQA) and 562–576 (QPQAQQPTPPQSQHQ). A compositionally biased stretch (polar residues) spans 577–586 (YSRPTDANGA). The segment covering 587–596 (QQTQRPQQPQ) has biased composition (low complexity). In terms of domain architecture, Protein kinase spans 634-885 (YRSFTKIGQG…AHDLLRHEFM (252 aa)). ATP contacts are provided by residues 640-648 (IGQGASGGV) and Lys663. The active-site Proton acceptor is the Asp753.

This sequence belongs to the protein kinase superfamily. STE Ser/Thr protein kinase family. STE20 subfamily.

It localises to the cytoplasm. Its subcellular location is the nucleus. The enzyme catalyses L-seryl-[protein] + ATP = O-phospho-L-seryl-[protein] + ADP + H(+). It carries out the reaction L-threonyl-[protein] + ATP = O-phospho-L-threonyl-[protein] + ADP + H(+). Functionally, MAP4K component of the MAPK pathway required for the mating pheromone response and the regulation of cell polarity and cell cycle. Phosphorylates histone H2B to form H2BS10ph. Is involved in conidiation, aerial hyphal growth and infection-related morphogenesis. The sequence is that of Serine/threonine-protein kinase MST20 (MST20) from Pyricularia oryzae (strain 70-15 / ATCC MYA-4617 / FGSC 8958) (Rice blast fungus).